The primary structure comprises 107 residues: Probable monothiol glutaredoxin 2 (107 aa).

In terms of domain architecture, Glutaredoxin spans 7 to 107 (FKFIENEIKN…LEKMLKAYTR (101 aa)). Position 24 (lysine 24) interacts with glutathione. Cysteine 32 is a binding site for [2Fe-2S] cluster. Residues arginine 61, phenylalanine 73, and 86 to 87 (CD) contribute to the glutathione site.

It belongs to the glutaredoxin family. Monothiol subfamily.

The protein is Probable monothiol glutaredoxin 2 (grxC2) of Rickettsia conorii (strain ATCC VR-613 / Malish 7).